We begin with the raw amino-acid sequence, 173 residues long: Translation initiation factor IF-3 (173 aa).

It belongs to the IF-3 family. As to quaternary structure, monomer.

The protein resides in the cytoplasm. Functionally, IF-3 binds to the 30S ribosomal subunit and shifts the equilibrium between 70S ribosomes and their 50S and 30S subunits in favor of the free subunits, thus enhancing the availability of 30S subunits on which protein synthesis initiation begins. The sequence is that of Translation initiation factor IF-3 from Clostridium tetani (strain Massachusetts / E88).